The following is a 706-amino-acid chain: ATP-dependent zinc metalloprotease FtsH (706 aa).

The span at Met1 to Glu17 shows a compositional bias: polar residues. A disordered region spans residues Met1–Gln20. Residues Met1–Lys24 are Cytoplasmic-facing. The helical transmembrane segment at Leu25–Phe45 threads the bilayer. At Trp46–Trp142 the chain is on the periplasmic side. The interval Gly88–Asn111 is disordered. Over residues Lys91–Arg100 the composition is skewed to basic and acidic residues. The helical transmembrane segment at Ile143–Ile163 threads the bilayer. Topologically, residues Phe164–Asn706 are cytoplasmic. Gly239–Thr246 is a binding site for ATP. His462 provides a ligand contact to Zn(2+). Glu463 is an active-site residue. The Zn(2+) site is built by His466 and Asp539. Positions Arg641 to Gly681 are disordered.

In the central section; belongs to the AAA ATPase family. It in the C-terminal section; belongs to the peptidase M41 family. Homohexamer. The cofactor is Zn(2+).

It is found in the cell inner membrane. Acts as a processive, ATP-dependent zinc metallopeptidase for both cytoplasmic and membrane proteins. Plays a role in the quality control of integral membrane proteins. The polypeptide is ATP-dependent zinc metalloprotease FtsH (Chlorobium luteolum (strain DSM 273 / BCRC 81028 / 2530) (Pelodictyon luteolum)).